We begin with the raw amino-acid sequence, 143 residues long: Large ribosomal subunit protein uL15 (143 aa).

A disordered region spans residues 1 to 48 (MRLNTISPSKGAKHSSKRLGRGIGSGLGKTSGRGHKGQKARSGCSIHR). Over residues 11 to 20 (GAKHSSKRLG) the composition is skewed to basic residues. The segment covering 21-31 (RGIGSGLGKTS) has biased composition (gly residues).

Belongs to the universal ribosomal protein uL15 family. In terms of assembly, part of the 50S ribosomal subunit.

Functionally, binds to the 23S rRNA. The protein is Large ribosomal subunit protein uL15 of Baumannia cicadellinicola subsp. Homalodisca coagulata.